The chain runs to 379 residues: F420-dependent formate dehydrogenase subunit beta (379 aa).

4Fe-4S ferredoxin-type domains follow at residues 271–301 (EKWK…CSLE) and 321–351 (IRLS…YIFH). Positions 280, 283, 286, 290, 330, 333, 336, and 340 each coordinate [4Fe-4S] cluster.

The protein belongs to the FrhB family. In terms of assembly, dimer of an alpha (FdhA) and a beta (FdhB) subunit. Requires [4Fe-4S] cluster as cofactor. The cofactor is FAD. It depends on Zn(2+) as a cofactor.

The enzyme catalyses oxidized coenzyme F420-(gamma-L-Glu)(n) + formate + 2 H(+) = reduced coenzyme F420-(gamma-L-Glu)(n) + CO2. Its function is as follows. Catalyzes the oxidation of formate to carbon dioxide, with coenzyme F420 as the electron acceptor. This Methanocaldococcus jannaschii (strain ATCC 43067 / DSM 2661 / JAL-1 / JCM 10045 / NBRC 100440) (Methanococcus jannaschii) protein is F420-dependent formate dehydrogenase subunit beta (fdhB).